The sequence spans 270 residues: Glutamate 5-kinase (270 aa).

Residue K17 coordinates ATP. 3 residues coordinate substrate: S57, D144, and N160. ATP-binding positions include 180–181 and 222–228; these read SD and TGGMTSK.

Belongs to the glutamate 5-kinase family.

The protein resides in the cytoplasm. It catalyses the reaction L-glutamate + ATP = L-glutamyl 5-phosphate + ADP. The protein operates within amino-acid biosynthesis; L-proline biosynthesis; L-glutamate 5-semialdehyde from L-glutamate: step 1/2. Functionally, catalyzes the transfer of a phosphate group to glutamate to form L-glutamate 5-phosphate. The protein is Glutamate 5-kinase of Lactococcus lactis subsp. lactis (strain IL1403) (Streptococcus lactis).